Here is a 340-residue protein sequence, read N- to C-terminus: Mitochondrial import receptor subunit TOM40 homolog 2 (340 aa).

Positions 1–37 (MGNVMASTADAESSRGRGHLSAGLRLPEAPQYSGGVP) are disordered.

This sequence belongs to the Tom40 family. In terms of assembly, forms part of the preprotein translocase of the outer mitochondrial membrane (TOM complex). Interacts with mitochondrial targeting sequences. Only expressed in the male germline, detected in primary spermatocytes as well as post-meiotic stages. Not detected in stem cells and spermatogonia near the tip of the testis.

It localises to the mitochondrion outer membrane. Its function is as follows. Channel-forming protein essential for import of protein precursors into mitochondria. In Drosophila melanogaster (Fruit fly), this protein is Mitochondrial import receptor subunit TOM40 homolog 2.